A 456-amino-acid polypeptide reads, in one-letter code: MTTQTNETIAAIATAPGRGGVGIIRVSGPKALPIAQHILGITPKPRYAHYGDFCNANGDILDQGIALYFPNPHSFTGEDVLELQGHGGPVILDMLLDAVVQAGARLARPGEFSERAFLNDKLDLAQAEAIADLIEASSQQAAKQALNSLKGEFSNKIHELVEQLIHLRMYVESAIDFPEEEIDFLSDGIVEGKLNDVIDQTDAVLAQAQQGALLRDGMKVVIAGRPNAGKSSLLNALAEKDIAIVTNIAGTTRDVLREHIHIDGMPLHIIDTAGLRDSPDHVEQIGIERAWGEIESADRILLLIDTTDNSQLDVNVHWPEFTSNAAYAKKLTVIYNKIDESGFSTTNHTSDAPYQTLPLSAKTGAGLDTLKAHLKSVMGFQSTTEGGFSARRRHIHAIEQAQNYLLTGREQLQLHTAGELLAEDLRAAQNHLSEITGAFTPDDLLGKIFSSFCIGK.

Arg25, Glu82, and Lys121 together coordinate (6S)-5-formyl-5,6,7,8-tetrahydrofolate. The region spanning 217–379 (GMKVVIAGRP…LKAHLKSVMG (163 aa)) is the TrmE-type G domain. Asn227 contributes to the K(+) binding site. GTP-binding positions include 227–232 (NAGKSS), 246–252 (TNIAGTT), and 271–274 (DTAG). Position 231 (Ser231) interacts with Mg(2+). The K(+) site is built by Thr246, Ile248, and Thr251. Mg(2+) is bound at residue Thr252. Lys456 serves as a coordination point for (6S)-5-formyl-5,6,7,8-tetrahydrofolate.

Belongs to the TRAFAC class TrmE-Era-EngA-EngB-Septin-like GTPase superfamily. TrmE GTPase family. As to quaternary structure, homodimer. Heterotetramer of two MnmE and two MnmG subunits. K(+) is required as a cofactor.

It is found in the cytoplasm. Exhibits a very high intrinsic GTPase hydrolysis rate. Involved in the addition of a carboxymethylaminomethyl (cmnm) group at the wobble position (U34) of certain tRNAs, forming tRNA-cmnm(5)s(2)U34. This is tRNA modification GTPase MnmE from Saccharophagus degradans (strain 2-40 / ATCC 43961 / DSM 17024).